A 1342-amino-acid chain; its full sequence is DNA-directed RNA polymerase subunit beta (1342 aa).

This sequence belongs to the RNA polymerase beta chain family. The RNAP catalytic core consists of 2 alpha, 1 beta, 1 beta' and 1 omega subunit. When a sigma factor is associated with the core the holoenzyme is formed, which can initiate transcription.

The catalysed reaction is RNA(n) + a ribonucleoside 5'-triphosphate = RNA(n+1) + diphosphate. DNA-dependent RNA polymerase catalyzes the transcription of DNA into RNA using the four ribonucleoside triphosphates as substrates. The sequence is that of DNA-directed RNA polymerase subunit beta from Yersinia pestis bv. Antiqua (strain Angola).